A 149-amino-acid polypeptide reads, in one-letter code: Putative pre-16S rRNA nuclease (149 aa).

This sequence belongs to the YqgF nuclease family.

Its subcellular location is the cytoplasm. Could be a nuclease involved in processing of the 5'-end of pre-16S rRNA. The chain is Putative pre-16S rRNA nuclease from Burkholderia multivorans (strain ATCC 17616 / 249).